The following is a 350-amino-acid chain: Glycosyltransferase 8 domain-containing protein 2 (350 aa).

The Cytoplasmic portion of the chain corresponds to 1 to 6 (MALLRK). Residues 7 to 24 (INQVLLFLLIVTLCGILY) traverse the membrane as a helical; Signal-anchor for type II membrane protein segment. Over 25-349 (KKVHKGTMLR…AGIFKLHHPN (325 aa)) the chain is Lumenal. N234 carries N-linked (GlcNAc...) asparagine glycosylation.

The protein belongs to the glycosyltransferase 8 family.

It is found in the membrane. This is Glycosyltransferase 8 domain-containing protein 2 (GLT8D2) from Bos taurus (Bovine).